Reading from the N-terminus, the 313-residue chain is Ribosomal RNA small subunit methyltransferase H (313 aa).

S-adenosyl-L-methionine contacts are provided by residues 35–37 (GGH), Asp55, Phe79, Asp101, and Gln108.

This sequence belongs to the methyltransferase superfamily. RsmH family.

It is found in the cytoplasm. It carries out the reaction cytidine(1402) in 16S rRNA + S-adenosyl-L-methionine = N(4)-methylcytidine(1402) in 16S rRNA + S-adenosyl-L-homocysteine + H(+). In terms of biological role, specifically methylates the N4 position of cytidine in position 1402 (C1402) of 16S rRNA. In Salmonella typhi, this protein is Ribosomal RNA small subunit methyltransferase H.